We begin with the raw amino-acid sequence, 488 residues long: Serine/threonine-protein kinase haspin homolog hrk1 (488 aa).

The 333-residue stretch at 156-488 (TFEIQKIGEA…SLLNWVRQKY (333 aa)) folds into the Protein kinase domain. Residues 162–170 (IGEASYSEV) and Lys184 contribute to the ATP site. Asp305 serves as the catalytic Proton acceptor.

Belongs to the protein kinase superfamily. Ser/Thr protein kinase family. Haspin subfamily. In terms of assembly, interacts with pds5 and swi6.

It is found in the cytoplasm. The protein localises to the chromosome. The enzyme catalyses L-seryl-[protein] + ATP = O-phospho-L-seryl-[protein] + ADP + H(+). The catalysed reaction is L-threonyl-[protein] + ATP = O-phospho-L-threonyl-[protein] + ADP + H(+). Serine/threonine haspin-like protein kinase involved in cell cycle regulation. Acts in chromosomal passenger complex (CPC) targeting to centromeres by phosphorylating histone H3 at 'Thr3' (H3T3ph). This Schizosaccharomyces pombe (strain 972 / ATCC 24843) (Fission yeast) protein is Serine/threonine-protein kinase haspin homolog hrk1 (hrk1).